We begin with the raw amino-acid sequence, 154 residues long: Myoglobin (154 aa).

The region spanning 2–148 (GLSDGEWHLV…FRNDIAAKYK (147 aa)) is the Globin domain. A Phosphoserine modification is found at Ser-4. His-65 is a binding site for nitrite. Residue His-65 participates in O2 binding. Thr-68 bears the Phosphothreonine mark. His-94 is a binding site for heme b.

This sequence belongs to the globin family. As to quaternary structure, monomeric.

It is found in the cytoplasm. The protein localises to the sarcoplasm. It carries out the reaction Fe(III)-heme b-[protein] + nitric oxide + H2O = Fe(II)-heme b-[protein] + nitrite + 2 H(+). It catalyses the reaction H2O2 + AH2 = A + 2 H2O. Functionally, monomeric heme protein which primary function is to store oxygen and facilitate its diffusion within muscle tissues. Reversibly binds oxygen through a pentacoordinated heme iron and enables its timely and efficient release as needed during periods of heightened demand. Depending on the oxidative conditions of tissues and cells, and in addition to its ability to bind oxygen, it also has a nitrite reductase activity whereby it regulates the production of bioactive nitric oxide. Under stress conditions, like hypoxia and anoxia, it also protects cells against reactive oxygen species thanks to its pseudoperoxidase activity. This is Myoglobin (MB) from Halichoerus grypus (Gray seal).